The primary structure comprises 1038 residues: Probable LRR receptor-like serine/threonine-protein kinase At1g53430 (1038 aa).

Residues 1 to 28 (MGFIFSTEKVVYVLLLIFVCLENFGSNA) form the signal peptide. Over 29–609 (QLLPEDEVQT…VDTGKPLSNG (581 aa)) the chain is Extracellular. Asn48, Asn77, Asn85, Asn112, and Asn127 each carry an N-linked (GlcNAc...) asparagine glycan. LRR repeat units lie at residues 113–137 (LTRL…LSQI), 139–160 (LEIL…LGDI), 161–184 (TTLT…LGNL), 185–208 (RSLK…LSNL), 210–234 (NLTE…NWTL), and 236–256 (ERLD…ISNL). Asn196, Asn210, Asn231, Asn255, and Asn258 each carry an N-linked (GlcNAc...) asparagine glycan. LRR repeat units lie at residues 259-281 (LTEL…LRNL), 282-305 (MKMK…IGSM), 306-328 (SELK…TFRN), 330-351 (DAFN…QFII), and 352-374 (NSKE…SCNQ). N-linked (GlcNAc...) asparagine glycosylation is found at Asn339, Asn363, Asn471, and Asn561. A helical membrane pass occupies residues 610–630 (AVAGIVIAACAVFGLLVLVIL). Topologically, residues 631–1038 (RLTGYLGGKE…LDDLTDVKIE (408 aa)) are cytoplasmic. Position 658 is a phosphothreonine (Thr658). The 282-residue stretch at 669 to 950 (FDPENKIGEG…EGKIKVQPPL (282 aa)) folds into the Protein kinase domain. Residues 675–683 (IGEGGFGPV) and Lys697 each bind ATP. The residue at position 742 (Tyr742) is a Phosphotyrosine. The active-site Proton acceptor is the Asp795. Phosphoserine is present on Ser828. A phosphothreonine mark is found at Thr829 and Thr834. Tyr842 carries the phosphotyrosine modification. Residues 984–1038 (RNREQDISSSSMDGPWVDSSFSEPGKDVSLQQQEEGRSSSSSRKLLDDLTDVKIE) form a disordered region. Basic and acidic residues predominate over residues 1027-1038 (KLLDDLTDVKIE).

The protein belongs to the protein kinase superfamily. Ser/Thr protein kinase family.

The protein localises to the membrane. The catalysed reaction is L-seryl-[protein] + ATP = O-phospho-L-seryl-[protein] + ADP + H(+). It carries out the reaction L-threonyl-[protein] + ATP = O-phospho-L-threonyl-[protein] + ADP + H(+). The polypeptide is Probable LRR receptor-like serine/threonine-protein kinase At1g53430 (Arabidopsis thaliana (Mouse-ear cress)).